A 171-amino-acid chain; its full sequence is Co-chaperone protein HscB (171 aa).

The 73-residue stretch at 2 to 74 (DYFTLFGLPA…LTRAEYLLSL (73 aa)) folds into the J domain.

It belongs to the HscB family. In terms of assembly, interacts with HscA and stimulates its ATPase activity. Interacts with IscU.

Its function is as follows. Co-chaperone involved in the maturation of iron-sulfur cluster-containing proteins. Seems to help targeting proteins to be folded toward HscA. The chain is Co-chaperone protein HscB from Citrobacter koseri (strain ATCC BAA-895 / CDC 4225-83 / SGSC4696).